Reading from the N-terminus, the 211-residue chain is FMN-dependent NADH:quinone oxidoreductase 2 (211 aa).

Residue 17–19 participates in FMN binding; that stretch reads SYS.

This sequence belongs to the azoreductase type 1 family. In terms of assembly, homodimer. Requires FMN as cofactor.

The catalysed reaction is 2 a quinone + NADH + H(+) = 2 a 1,4-benzosemiquinone + NAD(+). It catalyses the reaction N,N-dimethyl-1,4-phenylenediamine + anthranilate + 2 NAD(+) = 2-(4-dimethylaminophenyl)diazenylbenzoate + 2 NADH + 2 H(+). In terms of biological role, quinone reductase that provides resistance to thiol-specific stress caused by electrophilic quinones. Functionally, also exhibits azoreductase activity. Catalyzes the reductive cleavage of the azo bond in aromatic azo compounds to the corresponding amines. The protein is FMN-dependent NADH:quinone oxidoreductase 2 of Bacillus licheniformis (strain ATCC 14580 / DSM 13 / JCM 2505 / CCUG 7422 / NBRC 12200 / NCIMB 9375 / NCTC 10341 / NRRL NRS-1264 / Gibson 46).